The primary structure comprises 448 residues: Putative RNA-ligase (448 aa).

It belongs to the asfivirus M448R family.

The protein resides in the virion. The polypeptide is Putative RNA-ligase (Ornithodoros (relapsing fever ticks)).